A 405-amino-acid polypeptide reads, in one-letter code: Multidrug resistance protein MdtH (405 aa).

12 helical membrane passes run Tyr13–Ile33, Ser34–Leu54, Met78–Ile95, Pro99–Phe116, Leu139–Leu159, Leu165–Leu185, Tyr213–Ile233, Ala243–Ile263, Leu277–Leu297, Ala299–Glu319, Leu340–Gly360, and Ile365–Tyr385.

Belongs to the major facilitator superfamily. DHA1 family. MdtH (TC 2.A.1.2.21) subfamily.

It is found in the cell inner membrane. The protein is Multidrug resistance protein MdtH of Sodalis glossinidius (strain morsitans).